Consider the following 213-residue polypeptide: High frequency lysogenization protein HflD (213 aa).

Residues 99–126 (LSSAKGALDTLGNRINGLQRQLEHFDLQ) adopt a coiled-coil conformation.

The protein belongs to the HflD family. Interacts with CII protein from phage lambda.

It is found in the cytoplasm. It localises to the cell inner membrane. Negative regulator of phage lambda lysogenization. Contributes to the degradation of the phage regulatory protein CII. Acts probably by holding CII on the membrane surface, away from the target promoters, but close to the FtsH protease. The sequence is that of High frequency lysogenization protein HflD from Escherichia coli O157:H7.